We begin with the raw amino-acid sequence, 2153 residues long: Genome polyprotein (2153 aa).

Residue Gly2 is the site of N-myristoyl glycine; by host attachment. At 2-1466 the chain is on the cytoplasmic side; it reads GAQVSRQNVG…DLNIANSIIT (1465 aa). An amphipathic alpha-helix region spans residues 565 to 582; sequence PITQNPVERYVDEVLNEV. Residues His871 and Asp888 each act as for protease 2A activity in the active site. Zn(2+)-binding residues include Cys905 and Cys907. Cys959 serves as the catalytic For protease 2A activity. Zn(2+) contacts are provided by Cys965 and His967. Residues 1091–1160 form a membrane-binding region; it reads SDSWLKKFTE…NLRAADTNTQ (70 aa). The oligomerization stretch occupies residues 1091-1224; it reads SDSWLKKFTE…PPGTGKSITT (134 aa). The interval 1112-1116 is RNA-binding; it reads GNKIS. An SF3 helicase domain is found at 1186 to 1346; that stretch reads KRIKVLYHKC…YKDNQGKLDV (161 aa). Residues Cys1353, Cys1364, and Cys1369 each coordinate Zn(2+). A C4-type; degenerate zinc finger spans residues 1353-1369; it reads CDVDSKIGNAKCCPFVC. Positions 1396 to 1403 are RNA-binding; that stretch reads EDKRRRQV. The segment at 1407–1412 is oligomerization; it reads MSAIFQ. Residues 1467-1482 lie within the membrane without spanning it; sequence IIANIISIAGIIYIIY. Topologically, residues 1483 to 2153 are cytoplasmic; it reads KLFCSLQGPY…LLRHEWYEKF (671 aa). Position 1492 is an O-(5'-phospho-RNA)-tyrosine (Tyr1492). The 179-residue stretch at 1511 to 1689 folds into the Peptidase C3 domain; it reads GPEEEFGMSI…FSSMLLRSYF (179 aa). Residues His1550, Glu1581, and Cys1657 each act as for protease 3C activity in the active site. The 114-residue stretch at 1921-2034 folds into the RdRp catalytic domain; the sequence is DCIMAFDYTN…SYKYKLDMEA (114 aa). Mg(2+) contacts are provided by Asp1927 and Asp2020.

Belongs to the picornaviruses polyprotein family. Interacts with capsid protein VP1 and capsid protein VP3 to form heterotrimeric protomers. In terms of assembly, interacts with capsid protein VP0, and capsid protein VP3 to form heterotrimeric protomers. Five protomers subsequently associate to form pentamers which serve as building blocks for the capsid. Interacts with capsid protein VP2, capsid protein VP3 and capsid protein VP4 following cleavage of capsid protein VP0. As to quaternary structure, interacts with capsid protein VP1 and capsid protein VP3 in the mature capsid. Interacts with capsid protein VP0 and capsid protein VP1 to form heterotrimeric protomers. Five protomers subsequently associate to form pentamers which serve as building blocks for the capsid. Interacts with capsid protein VP4 in the mature capsid. Interacts with protein 2C; this interaction may be important for virion morphogenesis. In terms of assembly, interacts with capsid protein VP1 and capsid protein VP3. As to quaternary structure, homodimer. Homohexamer; forms a hexameric ring structure with 6-fold symmetry characteristic of AAA+ ATPases. Interacts (via N-terminus) with host RTN3 (via reticulon domain); this interaction is important for viral replication. Interacts with capsid protein VP3; this interaction may be important for virion morphogenesis. In terms of assembly, interacts with protein 3CD. As to quaternary structure, homodimer. Interacts with host GBF1. Interacts (via GOLD domain) with host ACBD3 (via GOLD domain); this interaction allows the formation of a viral protein 3A/ACBD3 heterotetramer with a 2:2 stoichiometry, which will stimulate the recruitment of host PI4KB in order to synthesize PI4P at the viral RNA replication sites. Interacts with RNA-directed RNA polymerase. In terms of assembly, interacts with protein 3AB and with RNA-directed RNA polymerase. As to quaternary structure, interacts with Viral protein genome-linked and with protein 3CD. Mg(2+) is required as a cofactor. Specific enzymatic cleavages in vivo by the viral proteases yield processing intermediates and the mature proteins. Post-translationally, myristoylation is required for the formation of pentamers during virus assembly. Further assembly of 12 pentamers and a molecule of genomic RNA generates the provirion. In terms of processing, during virion maturation, immature virions are rendered infectious following cleavage of VP0 into VP4 and VP2. This maturation seems to be an autocatalytic event triggered by the presence of RNA in the capsid and it is followed by a conformational change infectious virion. Myristoylation is required during RNA encapsidation and formation of the mature virus particle. Post-translationally, VPg is uridylylated by the polymerase into VPg-pUpU. This acts as a nucleotide-peptide primer for the genomic RNA replication.

The protein localises to the virion. It localises to the host cytoplasm. It is found in the host cytoplasmic vesicle membrane. The protein resides in the host nucleus. It carries out the reaction a ribonucleoside 5'-triphosphate + H2O = a ribonucleoside 5'-diphosphate + phosphate + H(+). It catalyses the reaction Selective cleavage of Tyr-|-Gly bond in the picornavirus polyprotein.. The catalysed reaction is RNA(n) + a ribonucleoside 5'-triphosphate = RNA(n+1) + diphosphate. The enzyme catalyses Selective cleavage of Gln-|-Gly bond in the poliovirus polyprotein. In other picornavirus reactions Glu may be substituted for Gln, and Ser or Thr for Gly.. Replication or transcription is subject to high level of random mutations by the nucleotide analog ribavirin. Forms an icosahedral capsid of pseudo T=3 symmetry with capsid proteins VP2 and VP3. The capsid is 300 Angstroms in diameter, composed of 60 copies of each capsid protein and enclosing the viral positive strand RNA genome. Capsid protein VP1 mainly forms the vertices of the capsid. Capsid protein VP1 interacts with host cell receptor to provide virion attachment to target host cells. This attachment induces virion internalization. Tyrosine kinases are probably involved in the entry process. After binding to its receptor, the capsid undergoes conformational changes. Capsid protein VP1 N-terminus (that contains an amphipathic alpha-helix) and capsid protein VP4 are externalized. Together, they shape a pore in the host membrane through which viral genome is translocated to host cell cytoplasm. Its function is as follows. Forms an icosahedral capsid of pseudo T=3 symmetry with capsid proteins VP2 and VP3. The capsid is 300 Angstroms in diameter, composed of 60 copies of each capsid protein and enclosing the viral positive strand RNA genome. In terms of biological role, lies on the inner surface of the capsid shell. After binding to the host receptor, the capsid undergoes conformational changes. Capsid protein VP4 is released, Capsid protein VP1 N-terminus is externalized, and together, they shape a pore in the host membrane through which the viral genome is translocated into the host cell cytoplasm. Functionally, component of immature procapsids, which is cleaved into capsid proteins VP4 and VP2 after maturation. Allows the capsid to remain inactive before the maturation step. Cysteine protease that cleaves viral polyprotein and specific host proteins. It is responsible for the autocatalytic cleavage between the P1 and P2 regions, which is the first cleavage occurring in the polyprotein. Also cleaves the host translation initiation factor EIF4G1, in order to shut down the capped cellular mRNA translation. Inhibits the host nucleus-cytoplasm protein and RNA trafficking by cleaving host members of the nuclear pores. Counteracts stress granule formation probably by antagonizing its assembly or promoting its dissassembly. Its function is as follows. Plays an essential role in the virus replication cycle by acting as a viroporin. Creates a pore in the host endoplasmic reticulum and as a consequence releases Ca2+ in the cytoplasm of infected cell. In turn, high levels of cytoplasmic calcium may trigger membrane trafficking and transport of viral ER-associated proteins to viroplasms, sites of viral genome replication. In terms of biological role, induces and associates with structural rearrangements of intracellular membranes. Displays RNA-binding, nucleotide binding and NTPase activities. May play a role in virion morphogenesis and viral RNA encapsidation by interacting with the capsid protein VP3. Functionally, localizes the viral replication complex to the surface of membranous vesicles. It inhibits host cell endoplasmic reticulum-to-Golgi apparatus transport and causes the disassembly of the Golgi complex, possibly through GBF1 interaction. This would result in depletion of MHC, trail receptors and IFN receptors at the host cell surface. Plays an essential role in viral RNA replication by recruiting ACBD3 and PI4KB at the viral replication sites, thereby allowing the formation of the rearranged membranous structures where viral replication takes place. Acts as a primer for viral RNA replication and remains covalently bound to viral genomic RNA. VPg is uridylylated prior to priming replication into VPg-pUpU. The oriI viral genomic sequence may act as a template for this. The VPg-pUpU is then used as primer on the genomic RNA poly(A) by the RNA-dependent RNA polymerase to replicate the viral genome. During genome replication, the VPg-RNA linkage is removed by the host TDP2, thereby accelerating replication. During the late stage of the replication cycle, host TDP2 is excluded from sites of viral RNA synthesis and encapsidation, allowing for the generation of progeny virions. Its function is as follows. Involved in the viral replication complex and viral polypeptide maturation. It exhibits protease activity with a specificity and catalytic efficiency that is different from protease 3C. Protein 3CD lacks polymerase activity. Protein 3CD binds to the 5'UTR of the viral genome. In terms of biological role, major viral protease that mediates proteolytic processing of the polyprotein. Cleaves host EIF5B, contributing to host translation shutoff. Also cleaves host PABPC1, contributing to host translation shutoff. Cleaves host NLRP1, triggers host N-glycine-mediated degradation of the autoinhibitory NLRP1 N-terminal fragment. Functionally, replicates the viral genomic RNA on the surface of intracellular membranes. May form linear arrays of subunits that propagate along a strong head-to-tail interaction called interface-I. Covalently attaches UMP to a tyrosine of VPg, which is used to prime RNA synthesis. The positive stranded RNA genome is first replicated at virus induced membranous vesicles, creating a dsRNA genomic replication form. This dsRNA is then used as template to synthesize positive stranded RNA genomes. ss(+)RNA genomes are either translated, replicated or encapsidated. The polypeptide is Genome polyprotein (Human rhinovirus 16 (HRV-16)).